A 108-amino-acid polypeptide reads, in one-letter code: Nucleoid-associated protein HCH_02614 (108 aa).

It belongs to the YbaB/EbfC family. Homodimer.

Its subcellular location is the cytoplasm. It is found in the nucleoid. Functionally, binds to DNA and alters its conformation. May be involved in regulation of gene expression, nucleoid organization and DNA protection. This chain is Nucleoid-associated protein HCH_02614, found in Hahella chejuensis (strain KCTC 2396).